The following is a 290-amino-acid chain: Ig delta chain C region membrane-bound form (290 aa).

The 101-residue stretch at 5-105 folds into the Ig-like 1 domain; the sequence is PDMFLLSECK…WDSQSSKRVT (101 aa). A disulfide bridge links C26 with C78. N-linked (GlcNAc...) asparagine glycans are attached at residues N58 and N75. The tract at residues 89–111 is disordered; that stretch reads PFKFPESWDSQSSKRVTPTLQAK. The segment covering 96-111 has biased composition (polar residues); that stretch reads WDSQSSKRVTPTLQAK. N-linked (GlcNAc...) asparagine glycosylation is found at N112, N135, and N227. In terms of domain architecture, Ig-like 2 spans 133-233; it reads PSNLTVNILT…TKLNASKSLA (101 aa). The helical transmembrane segment at 262–279 threads the bilayer; sequence GLWPTMCTFVALFLLTLL. Residues 280–290 are Cytoplasmic-facing; it reads YSGFVTFIKVK.

Cell lines producing IgD contain several mRNA species for Ig delta chains. In plasmacytomas, the secreted form is the major component, and the membrane-bound form is a minor component. In spleen, however, the membrane-bound form is the major component. These two forms differ in their C-terminal segments.

It is found in the cell membrane. The sequence is that of Ig delta chain C region membrane-bound form from Mus musculus (Mouse).